Consider the following 250-residue polypeptide: Probable transcriptional regulatory protein Nther_1800 (250 aa).

Belongs to the TACO1 family.

It localises to the cytoplasm. This Natranaerobius thermophilus (strain ATCC BAA-1301 / DSM 18059 / JW/NM-WN-LF) protein is Probable transcriptional regulatory protein Nther_1800.